Reading from the N-terminus, the 270-residue chain is Formamidopyrimidine-DNA glycosylase (270 aa).

P2 serves as the catalytic Schiff-base intermediate with DNA. E3 functions as the Proton donor in the catalytic mechanism. The Proton donor; for beta-elimination activity role is filled by K58. 3 residues coordinate DNA: H91, R110, and R151. Residues 236–270 (LVYGRDGLPCPNCGRALKHATIGQRASVWCSHCQR) form an FPG-type zinc finger. Catalysis depends on R260, which acts as the Proton donor; for delta-elimination activity.

It belongs to the FPG family. Monomer. It depends on Zn(2+) as a cofactor.

The catalysed reaction is Hydrolysis of DNA containing ring-opened 7-methylguanine residues, releasing 2,6-diamino-4-hydroxy-5-(N-methyl)formamidopyrimidine.. The enzyme catalyses 2'-deoxyribonucleotide-(2'-deoxyribose 5'-phosphate)-2'-deoxyribonucleotide-DNA = a 3'-end 2'-deoxyribonucleotide-(2,3-dehydro-2,3-deoxyribose 5'-phosphate)-DNA + a 5'-end 5'-phospho-2'-deoxyribonucleoside-DNA + H(+). Functionally, involved in base excision repair of DNA damaged by oxidation or by mutagenic agents. Acts as a DNA glycosylase that recognizes and removes damaged bases. Has a preference for oxidized purines, such as 7,8-dihydro-8-oxoguanine (8-oxoG). Has AP (apurinic/apyrimidinic) lyase activity and introduces nicks in the DNA strand. Cleaves the DNA backbone by beta-delta elimination to generate a single-strand break at the site of the removed base with both 3'- and 5'-phosphates. The polypeptide is Formamidopyrimidine-DNA glycosylase (Stenotrophomonas maltophilia (strain R551-3)).